The following is a 177-amino-acid chain: RNA silencing suppressor (177 aa).

As to quaternary structure, homooctamer. The eight monomers assemble into a closed ring that binds RNA.

The protein localises to the host cytoplasm. Functionally, acts as a suppressor of RNA-mediated gene silencing, also known as post-transcriptional gene silencing (PTGS), a mechanism of plant viral defense that limits the accumulation of viral RNAs. Binds to ssRNAs and dsRNAs in vitro. Also functions as a replication enhancer. This chain is RNA silencing suppressor, found in Beta vulgaris (Sugar beet).